Here is a 574-residue protein sequence, read N- to C-terminus: Proline--tRNA ligase (574 aa).

It belongs to the class-II aminoacyl-tRNA synthetase family. ProS type 1 subfamily. Homodimer.

It localises to the cytoplasm. The catalysed reaction is tRNA(Pro) + L-proline + ATP = L-prolyl-tRNA(Pro) + AMP + diphosphate. In terms of biological role, catalyzes the attachment of proline to tRNA(Pro) in a two-step reaction: proline is first activated by ATP to form Pro-AMP and then transferred to the acceptor end of tRNA(Pro). As ProRS can inadvertently accommodate and process non-cognate amino acids such as alanine and cysteine, to avoid such errors it has two additional distinct editing activities against alanine. One activity is designated as 'pretransfer' editing and involves the tRNA(Pro)-independent hydrolysis of activated Ala-AMP. The other activity is designated 'posttransfer' editing and involves deacylation of mischarged Ala-tRNA(Pro). The misacylated Cys-tRNA(Pro) is not edited by ProRS. The polypeptide is Proline--tRNA ligase (Nitratidesulfovibrio vulgaris (strain DP4) (Desulfovibrio vulgaris)).